We begin with the raw amino-acid sequence, 770 residues long: Amyloid-beta precursor protein (770 aa).

Positions 1-17 (MLPGLALVLLAAWTARA) are cleaved as a signal peptide. At 18–701 (LEVPTDGNAG…AEDVGSNKGA (684 aa)) the chain is on the extracellular side. A GFLD subdomain region spans residues 28 to 123 (LLAEPQVAMF…PYRCLVGEFV (96 aa)). The region spanning 28–189 (LLAEPQVAMF…RGVEFVCCPL (162 aa)) is the E1 domain. Intrachain disulfides connect Cys38-Cys62, Cys73-Cys117, Cys98-Cys105, Cys133-Cys187, Cys144-Cys174, and Cys158-Cys186. 96 to 110 (NWCKRSRKQCKTHTH) contributes to the heparin binding site. The segment at 131-189 (DKCKFLHQERMDVCETHLHWHTVAKETCSEKSTNLHDYGMLLPCGIDKFRGVEFVCCPL) is cuBD subdomain. The tract at residues 135 to 155 (FLHQERMDVCETHLHWHTVAK) is copper-binding. The Cu(2+) site is built by His147, His151, and Tyr168. A zinc-binding region spans residues 181-188 (GVEFVCCP). The Zn(2+) site is built by Glu183, Cys186, and Cys187. Residues 196 to 207 (IDSADAEEDDSD) are compositionally biased toward acidic residues. The tract at residues 196-284 (IDSADAEEDD…TTTTTTESVE (89 aa)) is disordered. Ser198 carries the phosphoserine; by CK2 modification. Position 206 is a phosphoserine; by CK1 (Ser206). Tyr217 and Tyr262 each carry sulfotyrosine. Residues 228–264 (VAEEEEVADVEEEEAEDDEDDEDGDEVEEEAEEPYEE) show a composition bias toward acidic residues. Over residues 268 to 281 (RTTSIATTTTTTTE) the composition is skewed to low complexity. Cystine bridges form between Cys291/Cys341, Cys300/Cys324, and Cys316/Cys337. Positions 291-341 (CSEQAETGPCRAMISRWYFDVTEGKCAPFFYGGCGGNRNNFDTEEYCMAVC) constitute a BPTI/Kunitz inhibitor domain. Tyr336 is subject to Sulfotyrosine. The short motif at 344–365 (VMSQSLLKTTQEHLPQDPVKLP) is the OX-2 element. Residues 374–565 (AVDKYLETPG…EEIQDEVDEL (192 aa)) form the E2 domain. Positions 391-423 (FQKAKERLEAKHRERMSQVMREWEEAERQAKNL) are heparin-binding. Ser441 carries the post-translational modification Phosphoserine. Residues 491 to 522 (FNMLKKYVRAEQKDRQHTLKHFEHVRMVDPKK) are heparin-binding. A Phosphotyrosine modification is found at Tyr497. The interval 523 to 540 (AAQIRSQVMTHLRVIYER) is collagen-binding. N-linked (GlcNAc...) asparagine glycosylation is found at Asn542 and Asn571. Cu(2+)-binding residues include His677, Tyr681, His684, and His685. Zn(2+) contacts are provided by His677, Tyr681, His684, and His685. The segment at 695-722 (VGSNKGAIIGLMVGGVVIATVIVITLVM) is interaction with PSEN1. The chain crosses the membrane as a helical span at residues 702–722 (IIGLMVGGVVIATVIVITLVM). The Cytoplasmic segment spans residues 723-770 (LKKKQYTSIHHGVVEVDAAVTPEERHLSKMQQNGYENPTYKFFEQMQN). Residues 724–734 (KKKQYTSIHHG) carry the Basolateral sorting signal motif. Phosphothreonine is present on Thr729. Residue Ser730 is modified to Phosphoserine; by APP-kinase I. The interval 732–751 (HHGVVEVDAAVTPEERHLSK) is interaction with G(o)-alpha. Thr743 is modified (phosphothreonine; by CDK5 and MAPK10). Residues 756 to 770 (GYENPTYKFFEQMQN) form a required for the interaction with KIF5B and for anterograde transport in axons region. A Phosphotyrosine; by ABL1 modification is found at Tyr757. The YENPXY motif; contains endocytosis signal signature appears at 757–762 (YENPTY). Lys763 is covalently cross-linked (Glycyl lysine isopeptide (Lys-Gly) (interchain with G-Cter in ubiquitin)).

It belongs to the APP family. As to quaternary structure, binds, via its C-terminus, to the PID domain of several cytoplasmic proteins, including APBB family members, the APBA family, MAPK8IP1, SHC1 and NUMB and DAB1. Binding to DAB1 inhibits its serine phosphorylation. Interacts (via NPXY motif) with DAB2 (via PID domain); the interaction is impaired by tyrosine phosphorylation of the NPXY motif. Also interacts with GPCR-like protein BPP, APPBP1, IB1, KNS2 (via its TPR domains), APPBP2 (via BaSS) and DDB1. In vitro, it binds MAPT via the MT-binding domains. Associates with microtubules in the presence of ATP and in a kinesin-dependent manner. Interacts, through a C-terminal domain, with GNAO1. Amyloid-beta protein 42 binds CHRNA7 in hippocampal neurons. Amyloid-beta associates with HADH2. Interacts with CPEB1, ANKS1B and AGER. Interacts with ITM2B. Interacts with ITM2C. Interacts with IDE. Can form homodimers; dimerization is enhanced in the presence of Cu(2+) ions. Can form homodimers; this is promoted by heparin binding. Amyloid-beta protein 40 interacts with S100A9. CTF-alpha product of APP interacts with GSAP. Interacts with SORL1 (via N-terminal ectodomain); this interaction retains APP in the trans-Golgi network and reduces processing into soluble APP-alpha and amyloid-beta peptides. The C99 fragment also interacts with SORL1. Interacts with PLD3. Interacts with VDAC1. Interacts with NSG1; could regulate APP processing. Amyloid-beta protein 42 interacts with FPR2. Interacts (via transmembrane region) with PSEN1; the interaction is direct. Interacts with LRRK2. Interacts (via cytoplasmic domain) with KIF5B. Interacts (via C-terminus) with APBB2/FE65L1 (via C-terminus). Interacts (via intracellular domain) with APBB3. In terms of processing, proteolytically processed under normal cellular conditions. Cleavage either by alpha-secretase, beta-secretase or theta-secretase leads to generation and extracellular release of soluble APP peptides, S-APP-alpha and S-APP-beta, and the retention of corresponding membrane-anchored C-terminal fragments, C80, C83 and C99. Subsequent processing of C80 and C83 by gamma-secretase yields P3 peptides. This is the major secretory pathway and is non-amyloidogenic. Alternatively, presenilin/nicastrin-mediated gamma-secretase processing of C99 releases the amyloid-beta proteins, amyloid-beta protein 40 and amyloid-beta protein 42, major components of amyloid plaques, and the cytotoxic C-terminal fragments, gamma-CTF(50), gamma-CTF(57) and gamma-CTF(59). PSEN1 cleavage is more efficient with C83 than with C99 as substrate (in vitro). Amyloid-beta protein 40 and Amyloid-beta protein 42 are cleaved by ACE. Many other minor amyloid-beta peptides, amyloid-beta 1-X peptides, are found in cerebral spinal fluid (CSF) including the amyloid-beta X-15 peptides, produced from the cleavage by alpha-secretase. Proteolytically cleaved by caspases during neuronal apoptosis. Cleavage at Asp-739 by either caspase-3, -8 or -9 results in the production of the neurotoxic C31 peptide and the increased production of amyloid-beta peptides. Post-translationally, N- and O-glycosylated. In terms of processing, phosphorylation in the C-terminal on tyrosine, threonine and serine residues is neuron-specific. Phosphorylation can affect APP processing, neuronal differentiation and interaction with other proteins. Phosphorylated on Thr-743 in neuronal cells by Cdc5 kinase and Mapk10, in dividing cells by Cdc2 kinase in a cell-cycle dependent manner with maximal levels at the G2/M phase and, in vitro, by GSK-3-beta. The Thr-743 phosphorylated form causes a conformational change which reduces binding of Fe65 family members. In dopaminergic (DA) neurons, phosphorylation on Thr-743 by LRKK2 promotes the production and the nuclear translocation of the APP intracellular domain (AICD) which induces DA neuron apoptosis. Phosphorylation on Tyr-757 is required for SHC binding. Phosphorylated in the extracellular domain by casein kinases on both soluble and membrane-bound APP. This phosphorylation is inhibited by heparin. Extracellular binding and reduction of copper, results in a corresponding oxidation of Cys-144 and Cys-158, and the formation of a disulfide bond. Post-translationally, trophic-factor deprivation triggers the cleavage of surface APP by beta-secretase to release sAPP-beta which is further cleaved to release an N-terminal fragment of APP (N-APP). In terms of processing, amyloid-beta peptides are degraded by IDE. Sulfated on tyrosine residues.

It localises to the cell membrane. Its subcellular location is the membrane. The protein resides in the perikaryon. The protein localises to the cell projection. It is found in the growth cone. It localises to the clathrin-coated pit. Its subcellular location is the early endosome. The protein resides in the cytoplasmic vesicle. The protein localises to the endoplasmic reticulum. It is found in the golgi apparatus. It localises to the secreted. Its subcellular location is the cell surface. The protein resides in the nucleus. The protein localises to the cytoplasm. Functionally, functions as a cell surface receptor and performs physiological functions on the surface of neurons relevant to neurite growth, neuronal adhesion and axonogenesis. Interaction between APP molecules on neighboring cells promotes synaptogenesis. Involved in cell mobility and transcription regulation through protein-protein interactions. Can promote transcription activation through binding to APBB1-KAT5 and inhibit Notch signaling through interaction with Numb. Couples to apoptosis-inducing pathways such as those mediated by G(o) and JIP. Inhibits G(o)-alpha ATPase activity. Acts as a kinesin I membrane receptor, mediating the axonal transport of beta-secretase and presenilin 1. By acting as a kinesin I membrane receptor, plays a role in axonal anterograde transport of cargo towards synapses in axons. May be involved in copper homeostasis/oxidative stress through copper ion reduction. In vitro, copper-metallated APP induces neuronal death directly or is potentiated through Cu(2+)-mediated low-density lipoprotein oxidation. Can regulate neurite outgrowth through binding to components of the extracellular matrix such as heparin and collagen I and IV. Induces a AGER-dependent pathway that involves activation of p38 MAPK, resulting in internalization of amyloid-beta peptide and mitochondrial dysfunction in cultured cortical neurons. Provides Cu(2+) ions for GPC1 which are required for release of nitric oxide (NO) and subsequent degradation of the heparan sulfate chains on GPC1. Its function is as follows. Amyloid-beta peptides are lipophilic metal chelators with metal-reducing activity. Binds transient metals such as copper, zinc and iron. In terms of biological role, the gamma-CTF peptides as well as the caspase-cleaved peptides, including C31, are potent enhancers of neuronal apoptosis. The sequence is that of Amyloid-beta precursor protein from Sus scrofa (Pig).